The primary structure comprises 491 residues: Carbohydrate ABC transporter substrate-binding protein (491 aa).

Positions 212, 247, 252, and 256 each coordinate Zn(2+).

This sequence belongs to the bacterial solute-binding protein 1 family. As to quaternary structure, exists as a monomer, homodimer, homotrimer and homotetramer; oligomerization increases with higher protein concentration.

It localises to the cell surface. Probably part of an ABC transporter complex involved in carbohydrate transport. The sequence is that of Carbohydrate ABC transporter substrate-binding protein from Streptococcus pneumoniae serotype 4 (strain ATCC BAA-334 / TIGR4).